Here is a 331-residue protein sequence, read N- to C-terminus: Ribosomal RNA small subunit methyltransferase H (331 aa).

S-adenosyl-L-methionine-binding positions include Gly38–Tyr40, Asp56, Phe83, Asp100, and Gln107. The disordered stretch occupies residues Asp287–Arg331.

This sequence belongs to the methyltransferase superfamily. RsmH family.

The protein resides in the cytoplasm. It catalyses the reaction cytidine(1402) in 16S rRNA + S-adenosyl-L-methionine = N(4)-methylcytidine(1402) in 16S rRNA + S-adenosyl-L-homocysteine + H(+). Specifically methylates the N4 position of cytidine in position 1402 (C1402) of 16S rRNA. This is Ribosomal RNA small subunit methyltransferase H from Cereibacter sphaeroides (strain KD131 / KCTC 12085) (Rhodobacter sphaeroides).